We begin with the raw amino-acid sequence, 592 residues long: V-type ATP synthase alpha chain 2 (592 aa).

Residue 237 to 244 participates in ATP binding; it reads GGFGTGKT.

It belongs to the ATPase alpha/beta chains family.

It carries out the reaction ATP + H2O + 4 H(+)(in) = ADP + phosphate + 5 H(+)(out). In terms of biological role, produces ATP from ADP in the presence of a proton gradient across the membrane. The V-type alpha chain is a catalytic subunit. The protein is V-type ATP synthase alpha chain 2 of Clostridium tetani (strain Massachusetts / E88).